A 506-amino-acid polypeptide reads, in one-letter code: Thyroid hormone receptor alpha (506 aa).

The segment at 1 to 32 is disordered; that stretch reads MEQKPSKVECGSDPEENSARSPDGKRKRKNGQ. The segment at 1-52 is modulating; that stretch reads MEQKPSKVECGSDPEENSARSPDGKRKRKNGQCSLKTSMSGYIPSYLDKDEQ. 8 residues coordinate Zn(2+): cysteine 53, cysteine 56, cysteine 70, cysteine 73, cysteine 91, cysteine 97, cysteine 107, and cysteine 110. 2 consecutive NR C4-type zinc fingers follow at residues 53–73 and 91–115; these read CVVCGDKATGYHYRCITCEGC and CKYDSCCVIDKITRNQCQLCRFKKC. The nuclear receptor DNA-binding region spans 53-127; the sequence is CVVCGDKATG…VGMAMDLVLD (75 aa). Positions 163–407 constitute an NR LBD domain; it reads EEWDLIHVAT…EGQQLLGMHV (245 aa). The 3,3',5-triiodo-L-thyronine site is built by arginine 228 and serine 277. Residues 460–506 form a disordered region; that stretch reads GEDDSSEAGSLTSSDEDPEVCEDAAQATQPLPEAPPRADGEGGGGGS.

It belongs to the nuclear hormone receptor family. NR1 subfamily. Binds DNA as a dimer; homodimer and heterodimer with RXRB. Interacts with NCOA3 and NCOA6 coactivators, leading to a strong increase of transcription of target genes. Probably interacts with SFPQ. Interacts with C1D. Interacts with AKAP13. Interacts with TP53INP2. Interacts with PER2. Interacts with PER2. Isoform alpha-2 and isoform alpha-1 interact with TACC1, but the interaction with alpha-1 is weaker. The interaction with isoform alpha-1, but not alpha-2, is decreased in the presence of thyroid hormone T3.

It is found in the nucleus. It localises to the cytoplasm. Functionally, nuclear hormone receptor that can act as a repressor or activator of transcription. High affinity receptor for thyroid hormones, including triiodothyronine and thyroxine. The protein is Thyroid hormone receptor alpha (THRA) of Sus scrofa (Pig).